The primary structure comprises 149 residues: Transthyretin (149 aa).

The signal sequence occupies residues Met1–Ala22. At Cys32 the chain carries Sulfocysteine. Lys37 is an L-thyroxine binding site. 4-carboxyglutamate is present on Glu64. Residues Glu76 and Ser139 each coordinate L-thyroxine.

The protein belongs to the transthyretin family. In terms of assembly, homotetramer. Dimer of dimers. In the homotetramer, subunits assemble around a central channel that can accommodate two ligand molecules. Interacts with RBP4. In terms of processing, sulfonation of the reactive cysteine Cys-32 enhances the stability of the native conformation of TTR, avoiding misassembly of the protein leading to amyloid formation. As to expression, detected in liver.

The protein resides in the secreted. Functionally, thyroid hormone-binding protein. Probably transports thyroxine from the bloodstream to the brain. The sequence is that of Transthyretin (TTR) from Macropus giganteus (Eastern gray kangaroo).